A 465-amino-acid chain; its full sequence is MKEPDAIKLFVGQIPRHLEEKDLKPIFEQFGRIFELTVIKDKYTGLHKGCAFLTYCARDSALKAQSALHEQKTLPGMNRPIQVKPADSESRGEDRKLFVGMLGKQQTDEDVRKMFEPFGTIDECTVLRGPDGTSKGCAFVKFQTHAEAQAAINTLHSSRTLPGASSSLVVKFADTEKERGLRRMQQVATQLGMFSPIALQFGAYSAYTQALMQQQAALVAAHSAYLSPMATMAAVQMQHMAAINANGLIATPITPSSGTSTPPAIAATPVSAIPAALGVNGYSPVPTQPTGQPAPDALYPNGVHPYPAQSPAAPVDPLQQAYAGMQHYTAAYPAAYSLVAPAFPQPPALVAQQPPPPPQQQQQQQQQQQQQQQREGPDGCNIFIYHLPQEFTDSEILQMFVPFGHVISAKVFVDRATNQSKCFGFVSFDNPASAQAAIQAMNGFQIGMKRLKVQLKRPKDANRPY.

2 RRM domains span residues 7–88 (IKLF…PADS) and 95–175 (RKLF…FADT). Over residues 346–359 (PPALVAQQPPPPPQ) the composition is skewed to pro residues. The segment at 346–379 (PPALVAQQPPPPPQQQQQQQQQQQQQQQREGPDG) is disordered. The segment covering 360–373 (QQQQQQQQQQQQQQ) has biased composition (low complexity). The RRM 3 domain occupies 380–458 (CNIFIYHLPQ…KRLKVQLKRP (79 aa)).

Belongs to the CELF/BRUNOL family. In terms of tissue distribution, expressed in brain.

It is found in the nucleus. The protein resides in the cytoplasm. RNA-binding protein involved in the regulation of pre-mRNA alternative splicing. Mediates exon inclusion and/or exclusion in pre-mRNA that are subject to tissue-specific and developmentally regulated alternative splicing. Specifically activates exon 5 inclusion of cardiac isoforms of TNNT2 during heart remodeling at the juvenile to adult transition. Activates the splicing of MAPT/Tau exon 10. Binds to muscle-specific splicing enhancer (MSE) intronic sites flanking the alternative exon 5 of TNNT2 pre-mRNA. The protein is CUGBP Elav-like family member 3 (CELF3) of Homo sapiens (Human).